A 660-amino-acid chain; its full sequence is DNA ligase (660 aa).

NAD(+) is bound by residues 32 to 36 (DEVYD), 81 to 82 (SM), and Glu112. The N6-AMP-lysine intermediate role is filled by Lys114. Positions 135, 169, 284, and 308 each coordinate NAD(+). Positions 402, 405, 418, and 423 each coordinate Zn(2+). The BRCT domain occupies 578–660 (VENSPLAHKT…ELLKEAGIEA (83 aa)).

It belongs to the NAD-dependent DNA ligase family. LigA subfamily. It depends on Mg(2+) as a cofactor. Mn(2+) serves as cofactor.

The enzyme catalyses NAD(+) + (deoxyribonucleotide)n-3'-hydroxyl + 5'-phospho-(deoxyribonucleotide)m = (deoxyribonucleotide)n+m + AMP + beta-nicotinamide D-nucleotide.. In terms of biological role, DNA ligase that catalyzes the formation of phosphodiester linkages between 5'-phosphoryl and 3'-hydroxyl groups in double-stranded DNA using NAD as a coenzyme and as the energy source for the reaction. It is essential for DNA replication and repair of damaged DNA. The polypeptide is DNA ligase (Nitratiruptor sp. (strain SB155-2)).